The sequence spans 237 residues: BTB/POZ domain-containing protein KCTD6 (237 aa).

Positions 1–104 (MDNGDWGYMM…FYQIEPLIQC (104 aa)) are interaction with ANK1 isoform Mu17. The interval 10 to 110 (MTDPVTLNVG…LIQCLNDPKP (101 aa)) is interaction with CUL3. The BTB domain maps to 12–81 (DPVTLNVGGH…LRTSELTLPL (70 aa)). The interaction with USP21 stretch occupies residues 113–187 (PMDTFEEVVE…TFGPCDYHQE (75 aa)).

Homopentamer. Interacts with KCTD11; KCTD6 and KCTD11 may associate in pentameric assemblies. Interacts (via BTB domain) with CUL3; initially a 4:4 stoichiometry has been reported, however, electron microscopy revealed pentameric states with a five-pointed pinwheel shape. The interaction with CUL3 is indicative for a participation in a BCR (BTB-CUL3-RBX1) E3 ubiquitin-protein ligase complex. Interacts with HDAC1; probably indirect as the interaction is requires the presence of KCTD11. Interacts with USP21 (preferentially catalytic inactive form). Interacts with ANK1 isoform Mu17; detected in striated muscle. Interacts with USP11. Highly expressed in cerebellum and brain. Expression is down-regulated in medulloblastoma.

It localises to the cytoplasm. The protein resides in the myofibril. Its subcellular location is the sarcomere. The protein localises to the m line. It participates in protein modification; protein ubiquitination. Functionally, probable substrate-specific adapter of a BCR (BTB-CUL3-RBX1) E3 ubiquitin-protein ligase complex mediating the ubiquitination and subsequent proteasomal degradation of target proteins. Promotes the ubiquitination of HDAC1; the function seems to depend on KCTD11:KCTD6 oligomerization. Can function as antagonist of the Hedgehog pathway by affecting the nuclear transfer of transcription factor GLI1; the function probably occurs via HDAC1 down-regulation, keeping GLI1 acetylated and inactive. Inhibits cell growth and tumorigenicity of medulloblastoma (MDB). Involved in regulating protein levels of ANK1 isoform Mu17 probably implicating CUL3-dependent proteasomal degradation. This is BTB/POZ domain-containing protein KCTD6 (KCTD6) from Homo sapiens (Human).